A 54-amino-acid polypeptide reads, in one-letter code: Large ribosomal subunit protein bL33A (54 aa).

The protein belongs to the bacterial ribosomal protein bL33 family.

The polypeptide is Large ribosomal subunit protein bL33A (Mesoplasma florum (strain ATCC 33453 / NBRC 100688 / NCTC 11704 / L1) (Acholeplasma florum)).